Reading from the N-terminus, the 827-residue chain is Beta-galactosidase 2 (827 aa).

The signal sequence occupies residues 1-24; that stretch reads MAASAVAVAFVVAVAAVLAAAASA. Glu-182 serves as the catalytic Proton donor. N-linked (GlcNAc...) asparagine glycosylation is present at Asn-209. The active-site Nucleophile is Glu-251. Asn-458 carries N-linked (GlcNAc...) asparagine glycosylation. An SUEL-type lectin domain is found at 741–827; it reads DYEKAKVHLQ…KRAVVEAICG (87 aa).

The protein belongs to the glycosyl hydrolase 35 family.

The protein resides in the secreted. It localises to the extracellular space. It is found in the apoplast. It catalyses the reaction Hydrolysis of terminal non-reducing beta-D-galactose residues in beta-D-galactosides.. The chain is Beta-galactosidase 2 from Oryza sativa subsp. japonica (Rice).